Reading from the N-terminus, the 401-residue chain is Nicotinate phosphoribosyltransferase (401 aa).

His224 is modified (phosphohistidine; by autocatalysis).

Belongs to the NAPRTase family. Transiently phosphorylated on a His residue during the reaction cycle. Phosphorylation strongly increases the affinity for substrates and increases the rate of nicotinate D-ribonucleotide production. Dephosphorylation regenerates the low-affinity form of the enzyme, leading to product release.

The catalysed reaction is nicotinate + 5-phospho-alpha-D-ribose 1-diphosphate + ATP + H2O = nicotinate beta-D-ribonucleotide + ADP + phosphate + diphosphate. The protein operates within cofactor biosynthesis; NAD(+) biosynthesis; nicotinate D-ribonucleotide from nicotinate: step 1/1. Catalyzes the synthesis of beta-nicotinate D-ribonucleotide from nicotinate and 5-phospho-D-ribose 1-phosphate at the expense of ATP. This Pseudomonas putida (strain ATCC 47054 / DSM 6125 / CFBP 8728 / NCIMB 11950 / KT2440) protein is Nicotinate phosphoribosyltransferase.